The chain runs to 262 residues: Intercellular adhesion molecule 4 (262 aa).

The N-terminal stretch at 1–22 is a signal peptide; it reads MESALLLPSLLLVAAYPRGGSP. Residues 23–231 lie on the Extracellular side of the membrane; it reads QQEWMQSPPA…LTVLALSPAS (209 aa). 2 Ig-like C2-type domains span residues 54–116 and 138–209; these read GGSA…TREA and GHKY…LNLD. N-linked (GlcNAc...) asparagine glycans are attached at residues N60, N84, and N182. Intrachain disulfides connect C61-C105, C61-C109, C65-C109, and C145-C202. Residues 232-252 form a helical membrane-spanning segment; it reads IALASTSIATLVGILLAVGAV. Over 253–262 the chain is Cytoplasmic; sequence YVRKYLAVQT.

Belongs to the immunoglobulin superfamily. ICAM family.

It localises to the cell membrane. The protein localises to the secreted. Functionally, adhesion molecule that binds to leukocyte adhesion LFA-1 protein LFA-1 (integrin alpha-L/beta-2). ICAM4 is also a ligand for alpha-4/beta-1 and alpha-V integrins. Isoform 2 may modulate binding of membrane-associated ICAM4. In Mus musculus (Mouse), this protein is Intercellular adhesion molecule 4 (Icam4).